The primary structure comprises 247 residues: Opacity protein opA52 (247 aa).

Ala-1 is a signal peptide.

Belongs to the opacity porin family.

It localises to the cell outer membrane. Implicated in a number of adherence functions. OPA proteins are implicated in pathogenesis and are subject to phase variation. The sequence is that of Opacity protein opA52 (opaG) from Neisseria gonorrhoeae.